A 40-amino-acid polypeptide reads, in one-letter code: Photosystem I reaction center subunit IX (40 aa).

A helical membrane pass occupies residues Phe-4–Val-24.

The protein belongs to the PsaJ family.

It localises to the cellular thylakoid membrane. May help in the organization of the PsaE and PsaF subunits. The protein is Photosystem I reaction center subunit IX of Prochlorococcus marinus (strain MIT 9313).